We begin with the raw amino-acid sequence, 348 residues long: Phospho-2-dehydro-3-deoxyheptonate aldolase, Trp-sensitive (348 aa).

This sequence belongs to the class-I DAHP synthase family.

It carries out the reaction D-erythrose 4-phosphate + phosphoenolpyruvate + H2O = 7-phospho-2-dehydro-3-deoxy-D-arabino-heptonate + phosphate. It participates in metabolic intermediate biosynthesis; chorismate biosynthesis; chorismate from D-erythrose 4-phosphate and phosphoenolpyruvate: step 1/7. Its function is as follows. Stereospecific condensation of phosphoenolpyruvate (PEP) and D-erythrose-4-phosphate (E4P) giving rise to 3-deoxy-D-arabino-heptulosonate-7-phosphate (DAHP). This Buchnera aphidicola subsp. Acyrthosiphon pisum (strain APS) (Acyrthosiphon pisum symbiotic bacterium) protein is Phospho-2-dehydro-3-deoxyheptonate aldolase, Trp-sensitive (aroH).